We begin with the raw amino-acid sequence, 326 residues long: WD repeat-containing protein slr1409 (326 aa).

WD repeat units follow at residues 47–77, 88–118, 129–159, 169–199, 210–240, and 252–282; these read GSDV…TLWT, GQKP…RLWN, PHRA…KIFT, LKSG…HLIN, TGQG…KLWN, and VPTG…RFWQ.

This chain is WD repeat-containing protein slr1409, found in Synechocystis sp. (strain ATCC 27184 / PCC 6803 / Kazusa).